The sequence spans 65 residues: uncharacterized protein (65 aa).

Residues 37–57 (ILAIMTSVLPVLLIYIIWIFI) form a helical membrane-spanning segment.

Its subcellular location is the cell membrane. This is an uncharacterized protein from Bacillus subtilis (strain 168).